A 196-amino-acid chain; its full sequence is Ribonuclease HII (196 aa).

The RNase H type-2 domain maps to 9–196 (NLIAGVDEVG…APVKRALNLV (188 aa)). A divalent metal cation is bound by residues aspartate 15, glutamate 16, and aspartate 107.

This sequence belongs to the RNase HII family. Mn(2+) is required as a cofactor. Mg(2+) serves as cofactor.

The protein resides in the cytoplasm. It catalyses the reaction Endonucleolytic cleavage to 5'-phosphomonoester.. Its function is as follows. Endonuclease that specifically degrades the RNA of RNA-DNA hybrids. The polypeptide is Ribonuclease HII (Proteus mirabilis (strain HI4320)).